Here is a 472-residue protein sequence, read N- to C-terminus: Regulator of G-protein signaling 6 (472 aa).

The region spanning 40 to 115 (KTGGVPIRTV…DDGTFYRFQA (76 aa)) is the DEP domain. Residues 261-330 (IRKQITFLNA…MSKEPSQQRV (70 aa)) enclose the G protein gamma domain. Residues 336-441 (SFDEILKDQV…LMKSDSYARF (106 aa)) enclose the RGS domain.

Interacts with GNB5. Interacts with RGS7BP, leading to regulate the subcellular location of the heterodimer formed with GNB5. Interacts with GNAI1.

It is found in the cytoplasm. It localises to the cytosol. The protein localises to the membrane. Its subcellular location is the nucleus. The protein resides in the cell membrane. In terms of biological role, regulates G protein-coupled receptor signaling cascades. Inhibits signal transduction by increasing the GTPase activity of G protein alpha subunits, thereby driving them into their inactive GDP-bound form. The RGS6/GNB5 dimer enhances GNAO1 GTPase activity. This is Regulator of G-protein signaling 6 (RGS6) from Homo sapiens (Human).